Here is a 369-residue protein sequence, read N- to C-terminus: Glutamate 5-kinase (369 aa).

Lys8 contacts ATP. Positions 49, 136, and 148 each coordinate substrate. ATP-binding positions include 168-169 (TD) and 211-217 (TGGMATK). The 79-residue stretch at 276–354 (KGELWLDEGA…TELANILGYA (79 aa)) folds into the PUA domain.

This sequence belongs to the glutamate 5-kinase family.

The protein resides in the cytoplasm. It catalyses the reaction L-glutamate + ATP = L-glutamyl 5-phosphate + ADP. It functions in the pathway amino-acid biosynthesis; L-proline biosynthesis; L-glutamate 5-semialdehyde from L-glutamate: step 1/2. In terms of biological role, catalyzes the transfer of a phosphate group to glutamate to form L-glutamate 5-phosphate. The polypeptide is Glutamate 5-kinase (Thermosynechococcus vestitus (strain NIES-2133 / IAM M-273 / BP-1)).